Consider the following 830-residue polypeptide: DNA replication licensing factor MCM6 (830 aa).

The segment at 159–186 (CLDCGNVVKNVEQQFKYTEPIICVNATC) adopts a C4-type zinc-finger fold. The region spanning 349 to 555 (FFNKIVDSIC…NTDYHIAHHI (207 aa)) is the MCM domain. 399–406 (GDPSCAKS) provides a ligand contact to ATP. The Arginine finger signature appears at 531–534 (SRFD). Residues 671-710 (DFQDADDGTNVPADNDAGQPTEMDAAPQQDGPENEQAADT) are disordered.

Belongs to the MCM family. As to quaternary structure, component of the minichromosome maintenance (MCM) complex, a heterotetramer composed of MCM2, MCM3, MCM4, MCM5, MCM6 and MCM7.

Its subcellular location is the nucleus. It carries out the reaction ATP + H2O = ADP + phosphate + H(+). Functionally, probable component of the MCM2-7 complex (MCM complex) that may function as a DNA helicase and which is essential to undergo a single round of replication initiation and elongation per cell cycle in eukaryotic cells. This chain is DNA replication licensing factor MCM6 (MCM6), found in Oryza sativa subsp. indica (Rice).